Here is a 344-residue protein sequence, read N- to C-terminus: Sesquiterpene synthase 9 (344 aa).

The Mg(2+) site is built by Asp-88, Asn-224, Ser-228, and Glu-232. The DDXXD motif signature appears at 88 to 92 (DEYSD). Residues 224–232 (NDMLSWNVE) carry the NSE/DTE motif motif. (2E,6E)-farnesyl diphosphate contacts are provided by Arg-313 and Tyr-314.

It belongs to the terpene synthase family. Requires Mg(2+) as cofactor.

Terpene cyclase that catalyzes the cyclization of farnesyl diphosphate (FPP) to a single major sesquiterpene scaffold whose chemical structure is still unknown. The protein is Sesquiterpene synthase 9 of Postia placenta (strain ATCC 44394 / Madison 698-R) (Brown rot fungus).